Reading from the N-terminus, the 967-residue chain is Sulfite dehydrogenase subunit A (967 aa).

Positions 15–71 (VEVKETTCYMCACRCGIRVHLRDGEVRYIDGNPNHPLNKGVICAKGSSGIMKQYSPG) constitute a 4Fe-4S Mo/W bis-MGD-type domain. [4Fe-4S] cluster is bound by residues cysteine 22, cysteine 25, cysteine 29, and cysteine 57.

It belongs to the prokaryotic molybdopterin-containing oxidoreductase family. Forms a heterotrimeric membrane-bound complex composed of a catalytic heterodimer (SoeAB) and a membrane anchor protein (SoeC). [4Fe-4S] cluster is required as a cofactor. Mo-bis(molybdopterin guanine dinucleotide) serves as cofactor.

The protein localises to the cell inner membrane. It carries out the reaction a quinone + sulfite + H2O = a quinol + sulfate. It catalyses the reaction a menaquinone + sulfite + H2O = a menaquinol + sulfate. Functionally, part of the SoeABC complex that catalyzes the oxidation of sulfite to sulfate. This Allochromatium vinosum (strain ATCC 17899 / DSM 180 / NBRC 103801 / NCIMB 10441 / D) (Chromatium vinosum) protein is Sulfite dehydrogenase subunit A.